The sequence spans 820 residues: Leucine-rich repeat and guanylate kinase domain-containing protein (820 aa).

The span at 72-83 shows a compositional bias: basic and acidic residues; sequence EAEAEQEEKQQE. The segment at 72 to 96 is disordered; it reads EAEAEQEEKQQEDGESEESEESEMQ. Residues 84-94 show a composition bias toward acidic residues; the sequence is DGESEESEESE. LRR repeat units lie at residues 129 to 149, 150 to 171, 172 to 193, 194 to 215, 216 to 237, 238 to 259, 260 to 280, 281 to 302, and 303 to 324; these read YLNL…CGYV, HLQK…SCMP, YLLE…KPPQ, NLKK…SAYH, TLTQ…ENCI, SLTH…GTLP, IKVL…EELK, ALQN…ENHD, and LLEV…EYIE. Residues 337-375 form the LRRCT domain; sequence NPIQTKPEYWFFVIYMLLRLTELDQQKIKVEEKVFAVNK. A Guanylate kinase-like domain is found at 414-597; the sequence is YPMLILTGPA…AYQKLSELIR (184 aa). Residue 421 to 428 coordinates ATP; sequence GPAACGKR. Residues 800-820 form a disordered region; the sequence is TIMDPGSNTKPTLPPIPHGRR. A compositionally biased stretch (pro residues) spans 811 to 820; that stretch reads TLPPIPHGRR.

As to quaternary structure, interacts (via guanylate kinase-like domain) with RIMBP3 (via coiled-coil region). Interacts (via guanylate kinase-like domain) with HOOK2. Interacts (via LRRCT domain) with KLC3. Interacts with HOOK1 and HOOK3. As to expression, highly expressed in the testis. During spermatid development is initially localized to a supra-nuclear region of round spermatids, and is particularly evident at the leading edge of the developing acrosome and acroplaxome. As maturation proceeded and nuclear elongation initiated, LRGUK moves distally to ultimately reside on the microtubules of the manchette. LRGUK is also evident in the sperm basal body and the sperm tail.

The protein localises to the cytoplasmic vesicle. Its subcellular location is the secretory vesicle. The protein resides in the acrosome. It localises to the cytoplasm. It is found in the cytoskeleton. The protein localises to the cilium basal body. Functionally, involved in multiple aspects of sperm assembly including acrosome attachment, shaping of the sperm head and in the early aspects of axoneme development. Not essential for primary cilium biogenesis. The protein is Leucine-rich repeat and guanylate kinase domain-containing protein (Lrguk) of Mus musculus (Mouse).